Here is a 369-residue protein sequence, read N- to C-terminus: Cystathionine gamma-synthase (369 aa).

K200 bears the N6-(pyridoxal phosphate)lysine mark.

This sequence belongs to the trans-sulfuration enzymes family. In terms of assembly, homotetramer. It depends on pyridoxal 5'-phosphate as a cofactor.

Its subcellular location is the cytoplasm. The catalysed reaction is O-succinyl-L-homoserine + L-cysteine = L,L-cystathionine + succinate + H(+). Functionally, catalyzes the formation of L-cystathionine from O-succinyl-L-homoserine (OSHS) and L-cysteine, via a gamma-replacement reaction. In the absence of thiol, catalyzes gamma-elimination to form 2-oxobutanoate, succinate and ammonia. The chain is Cystathionine gamma-synthase (metB) from Haemophilus influenzae (strain ATCC 51907 / DSM 11121 / KW20 / Rd).